A 623-amino-acid chain; its full sequence is Putative pentatricopeptide repeat-containing protein At3g11460, mitochondrial (623 aa).

A mitochondrion-targeting transit peptide spans 1-35 (MIVVTSFVRNSAVAAVASTPWNVRLRELAYQSLFS). 12 PPR repeats span residues 17–51 (ASTP…GSSP), 52–86 (DAFS…GCET), 87–117 (EPFV…NPQS), 120–154 (LSVC…GVSV), 155–189 (DSVT…GLDS), 190–220 (EVAV…MPVK), 221–255 (GLIT…GVCP), 256–290 (DPFT…GFVP), 291–321 (NVFV…MPVK), 322–356 (SLVS…GIRP), 357–387 (DGAV…MKRE), and 393–423 (GPEH…MPVE). The segment at 428–503 (VWGALLGACK…KPGYSYVEHK (76 aa)) is type E motif. Residues 504 to 535 (GRVHLFLAGDRSHEQTEEVHRMLDELETSVME) are type E(+) motif. The segment at 536–623 (LAGNMDCDRG…DGVCSCKDYW (88 aa)) is type DYW motif.

The protein belongs to the PPR family. PCMP-H subfamily. In terms of assembly, interacts with MORF8/RIP1.

Its subcellular location is the mitochondrion. Involved in C-to-U editing of mitochondrial RNA. Required specifically for editing the mitochondrial NAD2 transcript. The sequence is that of Putative pentatricopeptide repeat-containing protein At3g11460, mitochondrial (PCMP-H52) from Arabidopsis thaliana (Mouse-ear cress).